We begin with the raw amino-acid sequence, 131 residues long: Small ribosomal subunit protein eS8 (131 aa).

The interval 1-42 is disordered; it reads MKLGAYYKGGDLKKPSGGKKRKVRKTKKKALGGGPPQIPKLG. Residues 16–30 are compositionally biased toward basic residues; the sequence is SGGKKRKVRKTKKKA.

The protein belongs to the eukaryotic ribosomal protein eS8 family. Part of the 30S ribosomal subunit.

This chain is Small ribosomal subunit protein eS8, found in Pyrobaculum aerophilum (strain ATCC 51768 / DSM 7523 / JCM 9630 / CIP 104966 / NBRC 100827 / IM2).